A 383-amino-acid polypeptide reads, in one-letter code: Dual-specificity RNA methyltransferase RlmN (383 aa).

Glu-95 functions as the Proton acceptor in the catalytic mechanism. In terms of domain architecture, Radical SAM core spans 101-349 (EETRGTLCVS…TTVRKTRGDD (249 aa)). Cys-108 and Cys-354 are joined by a disulfide. Positions 115, 119, and 122 each coordinate [4Fe-4S] cluster. S-adenosyl-L-methionine is bound by residues 180–181 (GE), Ser-212, 234–236 (SLH), and Asn-311. The active-site S-methylcysteine intermediate is the Cys-354.

This sequence belongs to the radical SAM superfamily. RlmN family. [4Fe-4S] cluster serves as cofactor.

The protein resides in the cytoplasm. It carries out the reaction adenosine(2503) in 23S rRNA + 2 reduced [2Fe-2S]-[ferredoxin] + 2 S-adenosyl-L-methionine = 2-methyladenosine(2503) in 23S rRNA + 5'-deoxyadenosine + L-methionine + 2 oxidized [2Fe-2S]-[ferredoxin] + S-adenosyl-L-homocysteine. The catalysed reaction is adenosine(37) in tRNA + 2 reduced [2Fe-2S]-[ferredoxin] + 2 S-adenosyl-L-methionine = 2-methyladenosine(37) in tRNA + 5'-deoxyadenosine + L-methionine + 2 oxidized [2Fe-2S]-[ferredoxin] + S-adenosyl-L-homocysteine. Its function is as follows. Specifically methylates position 2 of adenine 2503 in 23S rRNA and position 2 of adenine 37 in tRNAs. m2A2503 modification seems to play a crucial role in the proofreading step occurring at the peptidyl transferase center and thus would serve to optimize ribosomal fidelity. The protein is Dual-specificity RNA methyltransferase RlmN of Paraburkholderia phytofirmans (strain DSM 17436 / LMG 22146 / PsJN) (Burkholderia phytofirmans).